Consider the following 189-residue polypeptide: Chitin synthase 1 (189 aa).

It belongs to the chitin synthase family.

It is found in the cell membrane. The catalysed reaction is [(1-&gt;4)-N-acetyl-beta-D-glucosaminyl](n) + UDP-N-acetyl-alpha-D-glucosamine = [(1-&gt;4)-N-acetyl-beta-D-glucosaminyl](n+1) + UDP + H(+). Polymerizes chitin, a structural polymer of the cell wall and septum, by transferring the sugar moiety of UDP-GlcNAc to the non-reducing end of the growing chitin polymer. The protein is Chitin synthase 1 (CHS1) of Xylohypha bantiana.